Consider the following 156-residue polypeptide: Arginine repressor (156 aa).

The protein belongs to the ArgR family.

Its subcellular location is the cytoplasm. The protein operates within amino-acid biosynthesis; L-arginine biosynthesis [regulation]. In terms of biological role, regulates arginine biosynthesis genes. In Erwinia tasmaniensis (strain DSM 17950 / CFBP 7177 / CIP 109463 / NCPPB 4357 / Et1/99), this protein is Arginine repressor.